Here is a 198-residue protein sequence, read N- to C-terminus: Snake venom metalloproteinase neuwiedase (198 aa).

Residues 8–198 enclose the Peptidase M12B domain; it reads RYIELVIVAD…QTFLTNHNPQ (191 aa). Ca(2+)-binding residues include glutamate 11 and aspartate 95. Histidine 144 serves as a coordination point for Zn(2+). Glutamate 145 is an active-site residue. Positions 148 and 154 each coordinate Zn(2+). Cystine bridges form between cysteine 159–cysteine 183 and cysteine 161–cysteine 166.

It belongs to the venom metalloproteinase (M12B) family. P-I subfamily. Zn(2+) is required as a cofactor. In terms of tissue distribution, expressed by the venom gland.

Its subcellular location is the secreted. With respect to regulation, inhibited by EDTA, EGTA and 1,10-phenanthroline, partially inhibited by beta-mercaptoethanol and not inhibited by serine protease inhibitors (leupeptin and aprotinin). Also inhibited by an excess of zinc, mercury and magnesium ions. Extracts of the plant Casearia mariquitensis neutralizes the decrease of platelets and plasma fibrinogen induced by the protease. The same extracts also partially inhibit Bbeta chain cleavage, but not Aalpha chain cleavage. In terms of biological role, this metalloprotease hydrolyzes the Aalpha chain of fibrin and fibrinogen first followed by the Bbeta chain and shows no effect on the gamma chain. It is also able to degrade type I collagen, fibronectin, laminin and induces inflammatory reaction. It is devoid of hemorrhagic and thrombotic activities, except in lung where it induces pulmonary bleeding. It also induces a mild myotoxic reaction. It is not able to inhibit platelet aggregation, but it induces decrease of platelets and plasma fibrinogen. It contributes to local tissue damage by inducing edema, inflammatory infiltrate and mild myotoxicity, and by degrading extracellular matrix components. The protein is Snake venom metalloproteinase neuwiedase of Bothrops pauloensis (Neuwied's lancehead).